We begin with the raw amino-acid sequence, 433 residues long: Histidinol dehydrogenase 2 (433 aa).

Residues tyrosine 130, glutamine 192, and asparagine 215 each coordinate NAD(+). Substrate contacts are provided by serine 238, glutamine 260, and histidine 263. Positions 260 and 263 each coordinate Zn(2+). Residues glutamate 328 and histidine 329 each act as proton acceptor in the active site. Positions 329, 362, 416, and 421 each coordinate substrate. A Zn(2+)-binding site is contributed by aspartate 362. Histidine 421 provides a ligand contact to Zn(2+).

This sequence belongs to the histidinol dehydrogenase family. Zn(2+) is required as a cofactor.

It carries out the reaction L-histidinol + 2 NAD(+) + H2O = L-histidine + 2 NADH + 3 H(+). Its pathway is amino-acid biosynthesis; L-histidine biosynthesis; L-histidine from 5-phospho-alpha-D-ribose 1-diphosphate: step 9/9. Its function is as follows. Catalyzes the sequential NAD-dependent oxidations of L-histidinol to L-histidinaldehyde and then to L-histidine. This is Histidinol dehydrogenase 2 (hisD2) from Nostoc sp. (strain PCC 7120 / SAG 25.82 / UTEX 2576).